Here is a 229-residue protein sequence, read N- to C-terminus: 7-cyano-7-deazaguanine synthase (229 aa).

8–18 (FSGGQDSTTCL) provides a ligand contact to ATP. Cys187, Cys196, Cys199, and Cys202 together coordinate Zn(2+).

This sequence belongs to the QueC family. It depends on Zn(2+) as a cofactor.

It catalyses the reaction 7-carboxy-7-deazaguanine + NH4(+) + ATP = 7-cyano-7-deazaguanine + ADP + phosphate + H2O + H(+). It participates in purine metabolism; 7-cyano-7-deazaguanine biosynthesis. In terms of biological role, catalyzes the ATP-dependent conversion of 7-carboxy-7-deazaguanine (CDG) to 7-cyano-7-deazaguanine (preQ(0)). The chain is 7-cyano-7-deazaguanine synthase from Shewanella halifaxensis (strain HAW-EB4).